We begin with the raw amino-acid sequence, 904 residues long: Trichohyalin-like protein 1 (904 aa).

The 36-residue stretch at 48–83 folds into the EF-hand domain; the sequence is CVLHAVEKNSNLLNIDSNGIISFDEFVLAIFNLLNL. Disordered regions lie at residues 102 to 792 and 858 to 890; these read PEKE…CSVE and PYTR…HPQR. The span at 113–128 shows a compositional bias: polar residues; the sequence is QATTGDGQWTVGTSPT. Basic and acidic residues-rich tracts occupy residues 172-185, 222-240, 268-300, 349-371, and 385-398; these read ASEH…HLEG, TERK…EPAR, ATQR…DEPS, NLGE…ETKD, and SDMR…RGPE. Positions 443–452 are enriched in polar residues; sequence ETQYLSSEGG. Residues 524–536 show a composition bias toward acidic residues; it reads VEEEDGYQGEDPE. Positions 538 to 554 are enriched in polar residues; it reads PFTQSDEGSSETPNSLA. Residues 555–578 show a composition bias toward low complexity; that stretch reads SEEGNSSSETGELPVQGDSQSQGD. Residues 586-598 show a composition bias toward polar residues; that stretch reads GGHNNNPDTQRQG. The segment covering 759-770 has biased composition (basic and acidic residues); it reads GDQKSPAKKEHN. Residues 771–780 show a composition bias toward polar residues; that stretch reads SSVPWSSLEK. Residues 881–890 are compositionally biased toward basic and acidic residues; it reads LEDKQGHPQR.

This sequence belongs to the S-100 family.

The chain is Trichohyalin-like protein 1 (TCHHL1) from Homo sapiens (Human).